A 129-amino-acid chain; its full sequence is Omega-scoloptoxin(05)-Ssm1a (129 aa).

The N-terminal stretch at 1–24 (MPSLCIIALFGTLTFYTLIPSIHT) is a signal peptide. The propeptide occupies 25-46 (LKCVRCDGPMSNYDCKTTYPAA).

This sequence belongs to the scoloptoxin-05 family. Contains 3 disulfide bonds. As to expression, expressed by the venom gland.

It is found in the secreted. Toxin that increase voltage-gated calcium channel (Cav) currents in DRG neurons by 70% and 120%, when 1 uM and 10 uM are tested, respectively. This Scolopendra mutilans (Chinese red-headed centipede) protein is Omega-scoloptoxin(05)-Ssm1a.